The sequence spans 184 residues: RNA 2',3'-cyclic phosphodiesterase (184 aa).

His-40 acts as the Proton donor in catalysis. 2 short sequence motifs (HXTX) span residues 40–43 and 125–128; these read HITL. The Proton acceptor role is filled by His-125.

Belongs to the 2H phosphoesterase superfamily. ThpR family.

It carries out the reaction a 3'-end 2',3'-cyclophospho-ribonucleotide-RNA + H2O = a 3'-end 2'-phospho-ribonucleotide-RNA + H(+). Its function is as follows. Hydrolyzes RNA 2',3'-cyclic phosphodiester to an RNA 2'-phosphomonoester. In vitro, ligates 5' and 3' half-tRNA molecules with 2',3'-cyclic phosphate and 5'-hydroxyl termini, respectively, to the product containing the 2'-5' phosphodiester linkage. Ligase activity requires GTP, but GTP hydrolysis is not required for the reaction, which is reversible. Ligase activity is weak compared to the phosphodiesterase activity. The sequence is that of RNA 2',3'-cyclic phosphodiesterase from Pyrococcus furiosus (strain ATCC 43587 / DSM 3638 / JCM 8422 / Vc1).